The primary structure comprises 79 residues: Acyl carrier protein (79 aa).

Residues 1 to 77 form the Carrier domain; the sequence is MNNVEKKIKK…KSIDYINNKN (77 aa). Residue Ser-37 is modified to O-(pantetheine 4'-phosphoryl)serine.

The protein belongs to the acyl carrier protein (ACP) family. 4'-phosphopantetheine is transferred from CoA to a specific serine of apo-ACP by AcpS. This modification is essential for activity because fatty acids are bound in thioester linkage to the sulfhydryl of the prosthetic group.

It is found in the cytoplasm. It participates in lipid metabolism; fatty acid biosynthesis. Its function is as follows. Carrier of the growing fatty acid chain in fatty acid biosynthesis. The protein is Acyl carrier protein of Buchnera aphidicola subsp. Schizaphis graminum (strain Sg).